We begin with the raw amino-acid sequence, 212 residues long: dITP/XTP pyrophosphatase (212 aa).

Ser7–Lys12 provides a ligand contact to substrate. Asp72 serves as the catalytic Proton acceptor. Asp72 is a binding site for Mg(2+). Substrate is bound by residues Ser73, Phe163–Asp166, Lys187, and His192–Arg193. The segment at Gly164 to Gly194 is disordered. Residues Thr183–His192 are compositionally biased toward basic and acidic residues.

The protein belongs to the HAM1 NTPase family. As to quaternary structure, homodimer. It depends on Mg(2+) as a cofactor.

The catalysed reaction is XTP + H2O = XMP + diphosphate + H(+). It carries out the reaction dITP + H2O = dIMP + diphosphate + H(+). The enzyme catalyses ITP + H2O = IMP + diphosphate + H(+). In terms of biological role, pyrophosphatase that catalyzes the hydrolysis of nucleoside triphosphates to their monophosphate derivatives, with a high preference for the non-canonical purine nucleotides XTP (xanthosine triphosphate), dITP (deoxyinosine triphosphate) and ITP. Seems to function as a house-cleaning enzyme that removes non-canonical purine nucleotides from the nucleotide pool, thus preventing their incorporation into DNA/RNA and avoiding chromosomal lesions. In Corynebacterium urealyticum (strain ATCC 43042 / DSM 7109), this protein is dITP/XTP pyrophosphatase.